The sequence spans 207 residues: Small ribosomal subunit protein uS2 (207 aa).

It belongs to the universal ribosomal protein uS2 family.

This chain is Small ribosomal subunit protein uS2, found in Pyrobaculum islandicum (strain DSM 4184 / JCM 9189 / GEO3).